A 189-amino-acid polypeptide reads, in one-letter code: Putative manganese efflux pump MntP (189 aa).

6 helical membrane passes run 3–23 (PISLLFLALAMSTDAFAAALG), 41–61 (LIFGAIETITPVIGWGIGQVA), 69–89 (DHWIAFTLLLVLGLHMIYNGI), 105–125 (FWILAVTAFATSIDALAVGVG), 133–153 (IVIAALAIGLATTVMVTIGVM), and 168–188 (IVGGIVLIIVGATILYEHLSA).

This sequence belongs to the MntP (TC 9.B.29) family.

It localises to the cell inner membrane. Its function is as follows. Probably functions as a manganese efflux pump. In Pseudomonas savastanoi pv. phaseolicola (strain 1448A / Race 6) (Pseudomonas syringae pv. phaseolicola (strain 1448A / Race 6)), this protein is Putative manganese efflux pump MntP.